The chain runs to 137 residues: Large ribosomal subunit protein uL16 (137 aa).

The protein belongs to the universal ribosomal protein uL16 family. Part of the 50S ribosomal subunit.

Functionally, binds 23S rRNA and is also seen to make contacts with the A and possibly P site tRNAs. The protein is Large ribosomal subunit protein uL16 of Rhodopseudomonas palustris (strain BisB5).